The primary structure comprises 522 residues: Probable cytochrome P450 12e1, mitochondrial (522 aa).

Cys-468 provides a ligand contact to heme.

Belongs to the cytochrome P450 family. The cofactor is heme.

It is found in the mitochondrion membrane. In Drosophila melanogaster (Fruit fly), this protein is Probable cytochrome P450 12e1, mitochondrial (Cyp12e1).